The following is a 228-amino-acid chain: Urease accessory protein UreF (228 aa).

It belongs to the UreF family. As to quaternary structure, ureD, UreF and UreG form a complex that acts as a GTP-hydrolysis-dependent molecular chaperone, activating the urease apoprotein by helping to assemble the nickel containing metallocenter of UreC. The UreE protein probably delivers the nickel.

It is found in the cytoplasm. Functionally, required for maturation of urease via the functional incorporation of the urease nickel metallocenter. This is Urease accessory protein UreF from Prochlorococcus marinus (strain MIT 9301).